Reading from the N-terminus, the 2476-residue chain is Non-reducing polyketide synthase ausA (2476 aa).

The N-terminal acylcarrier protein transacylase domain (SAT) stretch occupies residues 14–253 (VLFGPKYPEV…HHSNHTQAVE (240 aa)). A Ketosynthase family 3 (KS3) domain is found at 379–795 (AVPIAVTGMA…GSNAAIVLRE (417 aa)). Residues Cys544, His679, and His718 each act as for beta-ketoacyl synthase activity in the active site. The segment at 906-1210 (ICFGGQTGDT…LPTDLSGAQA (305 aa)) is malonyl-CoA:ACP transacylase (MAT) domain. Ser993 (for acyl/malonyl transferase activity) is an active-site residue. The N-terminal hotdog fold stretch occupies residues 1277 to 1405 (QEASLVRLLR…GRVSLQAAGS (129 aa)). The PKS/mFAS DH domain maps to 1277-1584 (QEASLVRLLR…FTGVSIQSLK (308 aa)). The tract at residues 1280 to 1583 (SLVRLLRQDG…TFTGVSIQSL (304 aa)) is product template (PT) domain. His1310 acts as the Proton acceptor; for dehydratase activity in catalysis. The tract at residues 1433–1584 (SSSGLKRSTV…FTGVSIQSLK (152 aa)) is C-terminal hotdog fold. Asp1491 (proton donor; for dehydratase activity) is an active-site residue. The Carrier domain occupies 1626 to 1700 (DGDLLAVQTM…GLVQRIFPGH (75 aa)). Ser1660 bears the O-(pantetheine 4'-phosphoryl)serine mark. The methyltransferase (CMeT) domain stretch occupies residues 1862–2095 (QHASEHKLLH…GFNWVDWTDN (234 aa)). The thioesterase (TE) domain stretch occupies residues 2128–2476 (NTVQEQTVLY…YEFLRRHVGL (349 aa)). Residues Ser2251, Asp2413, and His2445 each act as for thioesterase activity in the active site.

It catalyses the reaction 3 malonyl-CoA + acetyl-CoA + 2 S-adenosyl-L-methionine = 3,5-dimethylorsellinate + 2 S-adenosyl-L-homocysteine + 3 CO2 + 4 CoA. It participates in secondary metabolite biosynthesis; terpenoid biosynthesis. Its function is as follows. Non-reducing polyketide synthase; part of the gene cluster A that mediates the biosynthesis of austinol and dehydroaustinol, two fungal meroterpenoids. The first step of the pathway is the synthesis of 3,5-dimethylorsellinic acid by the polyketide synthase ausA. 3,5-dimethylorsellinic acid is then prenylated by the polyprenyl transferase ausN. Further epoxidation by the FAD-dependent monooxygenase ausM and cyclization by the probable terpene cyclase ausL lead to the formation of protoaustinoid A. Protoaustinoid A is then oxidized to spiro-lactone preaustinoid A3 by the combined action of the FAD-binding monooxygenases ausB and ausC, and the dioxygenase ausE. Acid-catalyzed keto-rearrangement and ring contraction of the tetraketide portion of preaustinoid A3 by ausJ lead to the formation of preaustinoid A4. The aldo-keto reductase ausK, with the help of ausH, is involved in the next step by transforming preaustinoid A4 into isoaustinone which is in turn hydroxylated by the P450 monooxygenase ausI to form austinolide. Finally, the cytochrome P450 monooxygenase ausG modifies austinolide to austinol. Austinol can be further modified to dehydroaustinol which forms a diffusible complex with diorcinol that initiates conidiation. Due to genetic rearrangements of the clusters and the subsequent loss of some enzymes, the end products of the Emericella nidulans austinoid biosynthesis clusters are austinol and dehydroaustinol, even if additional enzymes, such as the O-acetyltransferase ausQ and the cytochrome P450 monooxygenase ausR are still functional. In Emericella nidulans (strain FGSC A4 / ATCC 38163 / CBS 112.46 / NRRL 194 / M139) (Aspergillus nidulans), this protein is Non-reducing polyketide synthase ausA.